Reading from the N-terminus, the 306-residue chain is Formamidopyrimidine-DNA glycosylase (306 aa).

P2 acts as the Schiff-base intermediate with DNA in catalysis. The active-site Proton donor is the E3. K58 acts as the Proton donor; for beta-elimination activity in catalysis. H114, R136, and K179 together coordinate DNA. The FPG-type zinc finger occupies 270 to 306; sequence SVYDREGEACRTSGCRGTVERIVQAGRSTFYCPHCQK. R296 acts as the Proton donor; for delta-elimination activity in catalysis.

It belongs to the FPG family. Monomer. It depends on Zn(2+) as a cofactor.

The catalysed reaction is Hydrolysis of DNA containing ring-opened 7-methylguanine residues, releasing 2,6-diamino-4-hydroxy-5-(N-methyl)formamidopyrimidine.. The enzyme catalyses 2'-deoxyribonucleotide-(2'-deoxyribose 5'-phosphate)-2'-deoxyribonucleotide-DNA = a 3'-end 2'-deoxyribonucleotide-(2,3-dehydro-2,3-deoxyribose 5'-phosphate)-DNA + a 5'-end 5'-phospho-2'-deoxyribonucleoside-DNA + H(+). Involved in base excision repair of DNA damaged by oxidation or by mutagenic agents. Acts as a DNA glycosylase that recognizes and removes damaged bases. Has a preference for oxidized purines, such as 7,8-dihydro-8-oxoguanine (8-oxoG). Has AP (apurinic/apyrimidinic) lyase activity and introduces nicks in the DNA strand. Cleaves the DNA backbone by beta-delta elimination to generate a single-strand break at the site of the removed base with both 3'- and 5'-phosphates. This is Formamidopyrimidine-DNA glycosylase from Sinorhizobium medicae (strain WSM419) (Ensifer medicae).